Consider the following 287-residue polypeptide: Neuferricin homolog (287 aa).

An N-terminal signal peptide occupies residues Met1 to Gly22. In terms of domain architecture, Cytochrome b5 heme-binding spans Gly61–Gly146. Positions Tyr175–Asn204 form a coiled coil.

It belongs to the cytochrome b5 family. MAPR subfamily.

Its subcellular location is the secreted. Functionally, heme-binding protein. The chain is Neuferricin homolog from Drosophila melanogaster (Fruit fly).